The sequence spans 393 residues: NAD(P)H-quinone oxidoreductase subunit H, chloroplastic (393 aa).

The protein belongs to the complex I 49 kDa subunit family. In terms of assembly, NDH is composed of at least 16 different subunits, 5 of which are encoded in the nucleus.

It localises to the plastid. The protein localises to the chloroplast thylakoid membrane. It catalyses the reaction a plastoquinone + NADH + (n+1) H(+)(in) = a plastoquinol + NAD(+) + n H(+)(out). The enzyme catalyses a plastoquinone + NADPH + (n+1) H(+)(in) = a plastoquinol + NADP(+) + n H(+)(out). NDH shuttles electrons from NAD(P)H:plastoquinone, via FMN and iron-sulfur (Fe-S) centers, to quinones in the photosynthetic chain and possibly in a chloroplast respiratory chain. The immediate electron acceptor for the enzyme in this species is believed to be plastoquinone. Couples the redox reaction to proton translocation, and thus conserves the redox energy in a proton gradient. The sequence is that of NAD(P)H-quinone oxidoreductase subunit H, chloroplastic from Populus alba (White poplar).